Reading from the N-terminus, the 283-residue chain is 4-hydroxy-3-methylbut-2-enyl diphosphate reductase (283 aa).

[4Fe-4S] cluster is bound at residue C12. (2E)-4-hydroxy-3-methylbut-2-enyl diphosphate contacts are provided by H40 and H73. Dimethylallyl diphosphate-binding residues include H40 and H73. H40 and H73 together coordinate isopentenyl diphosphate. Position 95 (C95) interacts with [4Fe-4S] cluster. Residue H123 participates in (2E)-4-hydroxy-3-methylbut-2-enyl diphosphate binding. H123 contacts dimethylallyl diphosphate. H123 is an isopentenyl diphosphate binding site. E125 serves as the catalytic Proton donor. T161 is a (2E)-4-hydroxy-3-methylbut-2-enyl diphosphate binding site. C189 is a binding site for [4Fe-4S] cluster. (2E)-4-hydroxy-3-methylbut-2-enyl diphosphate-binding residues include S217, N219, and S261. Dimethylallyl diphosphate-binding residues include S217, N219, and S261. Positions 217, 219, and 261 each coordinate isopentenyl diphosphate.

Belongs to the IspH family. Requires [4Fe-4S] cluster as cofactor.

It catalyses the reaction isopentenyl diphosphate + 2 oxidized [2Fe-2S]-[ferredoxin] + H2O = (2E)-4-hydroxy-3-methylbut-2-enyl diphosphate + 2 reduced [2Fe-2S]-[ferredoxin] + 2 H(+). The enzyme catalyses dimethylallyl diphosphate + 2 oxidized [2Fe-2S]-[ferredoxin] + H2O = (2E)-4-hydroxy-3-methylbut-2-enyl diphosphate + 2 reduced [2Fe-2S]-[ferredoxin] + 2 H(+). It participates in isoprenoid biosynthesis; dimethylallyl diphosphate biosynthesis; dimethylallyl diphosphate from (2E)-4-hydroxy-3-methylbutenyl diphosphate: step 1/1. It functions in the pathway isoprenoid biosynthesis; isopentenyl diphosphate biosynthesis via DXP pathway; isopentenyl diphosphate from 1-deoxy-D-xylulose 5-phosphate: step 6/6. Functionally, catalyzes the conversion of 1-hydroxy-2-methyl-2-(E)-butenyl 4-diphosphate (HMBPP) into a mixture of isopentenyl diphosphate (IPP) and dimethylallyl diphosphate (DMAPP). Acts in the terminal step of the DOXP/MEP pathway for isoprenoid precursor biosynthesis. The chain is 4-hydroxy-3-methylbut-2-enyl diphosphate reductase from Geobacter sp. (strain M21).